We begin with the raw amino-acid sequence, 336 residues long: tRNA N6-adenosine threonylcarbamoyltransferase (336 aa).

Residues histidine 111 and histidine 115 each contribute to the Fe cation site. Substrate is bound by residues 133 to 137 (LISGG), aspartate 166, glycine 179, and asparagine 276. Aspartate 301 provides a ligand contact to Fe cation.

It belongs to the KAE1 / TsaD family. It depends on Fe(2+) as a cofactor.

Its subcellular location is the cytoplasm. The catalysed reaction is L-threonylcarbamoyladenylate + adenosine(37) in tRNA = N(6)-L-threonylcarbamoyladenosine(37) in tRNA + AMP + H(+). Its function is as follows. Required for the formation of a threonylcarbamoyl group on adenosine at position 37 (t(6)A37) in tRNAs that read codons beginning with adenine. Is involved in the transfer of the threonylcarbamoyl moiety of threonylcarbamoyl-AMP (TC-AMP) to the N6 group of A37, together with TsaE and TsaB. TsaD likely plays a direct catalytic role in this reaction. In Wolbachia pipientis subsp. Culex pipiens (strain wPip), this protein is tRNA N6-adenosine threonylcarbamoyltransferase.